The sequence spans 103 residues: Small ribosomal subunit protein uS10 (103 aa).

This sequence belongs to the universal ribosomal protein uS10 family. Part of the 30S ribosomal subunit.

Its function is as follows. Involved in the binding of tRNA to the ribosomes. The protein is Small ribosomal subunit protein uS10 of Shewanella loihica (strain ATCC BAA-1088 / PV-4).